We begin with the raw amino-acid sequence, 22 residues long: Brain peptide MVPVPVHHMADELLRNGPDTVI (22 aa).

This is Brain peptide MVPVPVHHMADELLRNGPDTVI from Apis mellifera (Honeybee).